Reading from the N-terminus, the 354-residue chain is Guanine nucleotide-binding protein alpha-3 subunit (354 aa).

Gly2 is lipidated: N-myristoyl glycine. Residue Cys4 is the site of S-palmitoyl cysteine attachment. One can recognise a G-alpha domain in the interval 33–354; that stretch reads KECKILLLGS…TNALKDSGIL (322 aa). The tract at residues 36–49 is G1 motif; sequence KILLLGSGESGKST. Residues 41 to 48, 177 to 183, 202 to 206, 271 to 274, and Ala326 each bind GTP; these read GSGESGKS, LRARSKT, DVGGQ, and NKID. Mg(2+) contacts are provided by Ser48 and Thr183. A G2 motif region spans residues 175–183; that stretch reads DVLRARSKT. The interval 198-207 is G3 motif; it reads IHLFDVGGQR. The interval 267 to 274 is G4 motif; sequence ILFLNKID. Residues 324 to 329 form a G5 motif region; sequence TQATDT.

Belongs to the G-alpha family. G proteins are composed of 3 units; alpha, beta and gamma. The alpha chain contains the guanine nucleotide binding site.

Its function is as follows. Guanine nucleotide-binding proteins (G proteins) are involved as modulators or transducers in various transmembrane signaling systems. GPA3 plays an active role in transmission of the pheromone signal. The polypeptide is Guanine nucleotide-binding protein alpha-3 subunit (GPA3) (Mycosarcoma maydis (Corn smut fungus)).